The chain runs to 193 residues: Holliday junction branch migration complex subunit RuvA (193 aa).

The domain I stretch occupies residues 1–64 (MIGRIAGILL…EDAHLLYGFL (64 aa)). A domain II region spans residues 65 to 139 (TQQERTTFRE…GKLGADLGAL (75 aa)). Residues 139–143 (LAGAA) are flexible linker. Residues 144–193 (SPSDHATDILNALLALGYSEKEGLAAIKNVPAGTGVSEGIKLALKALSKA) form a domain III region.

Belongs to the RuvA family. Homotetramer. Forms an RuvA(8)-RuvB(12)-Holliday junction (HJ) complex. HJ DNA is sandwiched between 2 RuvA tetramers; dsDNA enters through RuvA and exits via RuvB. An RuvB hexamer assembles on each DNA strand where it exits the tetramer. Each RuvB hexamer is contacted by two RuvA subunits (via domain III) on 2 adjacent RuvB subunits; this complex drives branch migration. In the full resolvosome a probable DNA-RuvA(4)-RuvB(12)-RuvC(2) complex forms which resolves the HJ.

The protein resides in the cytoplasm. Its function is as follows. The RuvA-RuvB-RuvC complex processes Holliday junction (HJ) DNA during genetic recombination and DNA repair, while the RuvA-RuvB complex plays an important role in the rescue of blocked DNA replication forks via replication fork reversal (RFR). RuvA specifically binds to HJ cruciform DNA, conferring on it an open structure. The RuvB hexamer acts as an ATP-dependent pump, pulling dsDNA into and through the RuvAB complex. HJ branch migration allows RuvC to scan DNA until it finds its consensus sequence, where it cleaves and resolves the cruciform DNA. The sequence is that of Holliday junction branch migration complex subunit RuvA from Burkholderia cenocepacia (strain ATCC BAA-245 / DSM 16553 / LMG 16656 / NCTC 13227 / J2315 / CF5610) (Burkholderia cepacia (strain J2315)).